We begin with the raw amino-acid sequence, 269 residues long: MATH domain and coiled-coil domain-containing protein At2g01790 (269 aa).

Residues 6-134 form the MATH domain; the sequence is AVKKLWVINN…NGEVDIVAEV (129 aa). Positions 228 to 269 form a coiled coil; it reads KLDWLEKKLKETGKSRLQEIEEDLKDLKVKCADMDALLEFLR.

The polypeptide is MATH domain and coiled-coil domain-containing protein At2g01790 (Arabidopsis thaliana (Mouse-ear cress)).